The following is a 582-amino-acid chain: Formate--tetrahydrofolate ligase (582 aa).

65-72 (TPLGEGKT) lines the ATP pocket.

The protein belongs to the formate--tetrahydrofolate ligase family.

The enzyme catalyses (6S)-5,6,7,8-tetrahydrofolate + formate + ATP = (6R)-10-formyltetrahydrofolate + ADP + phosphate. It participates in one-carbon metabolism; tetrahydrofolate interconversion. This is Formate--tetrahydrofolate ligase from Aliivibrio fischeri (strain ATCC 700601 / ES114) (Vibrio fischeri).